The sequence spans 357 residues: Protein-L-isoaspartate O-methyltransferase domain-containing protein 1 (357 aa).

Glycine 2 is lipidated: N-myristoyl glycine. Serine 64 is an active-site residue. 3 adoMet binding motif regions span residues 85-94 (LNLGSGTGYL), 160-164 (YDRIY), and 181-191 (LKVGGILVMPI). Residues 240 to 250 (VRNLQDLARIY) form a BC-box region. A disordered region spans residues 299–333 (PLDSEEDEKMEEDNKEEEEKDHNEAMKPEEPPQNL). The span at 301-317 (DSEEDEKMEEDNKEEEE) shows a compositional bias: acidic residues. Residues 318–333 (KDHNEAMKPEEPPQNL) are compositionally biased toward basic and acidic residues. The CUL-box stretch occupies residues 341 to 344 (LPLP).

It belongs to the methyltransferase superfamily. L-isoaspartyl/D-aspartyl protein methyltransferase family. As to quaternary structure, component of the probable ECS(PCMTD1) E3 ubiquitin-protein ligase complex, at least composed of CUL5, ELOB, ELOC, RBX2 and PCMTD1. Interacts (via the BC-box) with ELOB and ELOC; the interaction is direct and stabilizes PCMTD1.

Its subcellular location is the cytoplasm. The protein resides in the membrane. Functionally, substrate recognition component of an ECS (Elongin BC-CUL5-SOCS-box protein) E3 ubiquitin ligase complex which mediates the ubiquitination and subsequent proteasomal degradation of target proteins. Specifically binds to the methyltransferase cofactor S-adenosylmethionine (AdoMet) via the N-terminal AdoMet binding motif, but does not display methyltransferase activity. May provide an alternate maintenance pathway for modified proteins by acting as a damage-specific E3 ubiquitin ligase adaptor protein. In Homo sapiens (Human), this protein is Protein-L-isoaspartate O-methyltransferase domain-containing protein 1.